We begin with the raw amino-acid sequence, 532 residues long: Cytochrome P450 99A2 (532 aa).

The helical transmembrane segment at 30–50 (SAATLTLVSLLTLPILLALLT) threads the bilayer. Cysteine 468 is a binding site for heme. Residues 473 to 493 (FGMVLLELIVARLLYYFDWSL) traverse the membrane as a helical segment.

Belongs to the cytochrome P450 family. Heme is required as a cofactor.

The protein resides in the membrane. Involved in momilactone phytoalexins biosynthesis. Participates in the biosynthetic steps between 9-beta-pimara-7,15-diene and 3-beta-hydroxy-9-beta-pimara-7,15-dien-19,6-beta-olide. This Oryza sativa subsp. japonica (Rice) protein is Cytochrome P450 99A2 (CYP99A2).